We begin with the raw amino-acid sequence, 89 residues long: Small ribosomal subunit protein uS15 (89 aa).

The protein belongs to the universal ribosomal protein uS15 family. In terms of assembly, part of the 30S ribosomal subunit. Forms a bridge to the 50S subunit in the 70S ribosome, contacting the 23S rRNA.

Functionally, one of the primary rRNA binding proteins, it binds directly to 16S rRNA where it helps nucleate assembly of the platform of the 30S subunit by binding and bridging several RNA helices of the 16S rRNA. In terms of biological role, forms an intersubunit bridge (bridge B4) with the 23S rRNA of the 50S subunit in the ribosome. The sequence is that of Small ribosomal subunit protein uS15 from Paenarthrobacter aurescens (strain TC1).